A 498-amino-acid chain; its full sequence is Cytochrome P450 monooxygenase astB (498 aa).

Residues Phe7–Thr27 form a helical membrane-spanning segment. N-linked (GlcNAc...) asparagine glycosylation is found at Asn237, Asn248, and Asn346. Residue Cys425 participates in heme binding.

It belongs to the cytochrome P450 family. The cofactor is heme.

Its subcellular location is the membrane. The enzyme catalyses preasperterpenoid A + 4 reduced [NADPH--hemoprotein reductase] + 4 O2 = asperterpenoid A + 4 oxidized [NADPH--hemoprotein reductase] + 5 H2O + 5 H(+). The catalysed reaction is asperterpenoid A + 2 reduced [NADPH--hemoprotein reductase] + 2 O2 = asperterpenoid B + 2 oxidized [NADPH--hemoprotein reductase] + 3 H2O + 3 H(+). It participates in secondary metabolite biosynthesis; terpenoid biosynthesis. Its function is as follows. Cytochrome P450 monooxygenase; part of the gene cluster that mediates the biosynthesis of the asperterpenoids, sesterterpenes that exhibit anti-tuberculosis activity. The first step of the pathway is performed by the sesterterpene synthase astC that possesses both prenyl transferase and terpene cyclase activity, converting isopentenyl diphosphate and dimethylallyl diphosphate into geranylfarnesyl diphosphate (GFPP) and further converting GFPP into preasperterpenoid A, respectively. The cytochrome P450 monooxygenase astB then dually oxidizes preasperterpenoid A to produce asperterpenoid A along with a minor product, asperterpenoid B. Finally, the cytochrome P450 monooxygenase astA converts asperterpenoid A into asperterpenoid C. The protein is Cytochrome P450 monooxygenase astB of Talaromyces wortmannii (Penicillium wortmannii).